The following is a 478-amino-acid chain: Hexokinase (478 aa).

One can recognise a Hexokinase domain in the interval Glu-21–Ala-465. A hexokinase small subdomain region spans residues Thr-75–Ile-208. Lys-111 is a binding site for ATP. A glucose-binding region spans residues Pro-151–Phe-177. The hexokinase large subdomain stretch occupies residues Asn-209–Asp-454.

This sequence belongs to the hexokinase family. As to quaternary structure, monomer.

It catalyses the reaction a D-hexose + ATP = a D-hexose 6-phosphate + ADP + H(+). The catalysed reaction is D-fructose + ATP = D-fructose 6-phosphate + ADP + H(+). It carries out the reaction D-glucose + ATP = D-glucose 6-phosphate + ADP + H(+). It participates in carbohydrate metabolism; hexose metabolism. It functions in the pathway carbohydrate degradation; glycolysis; D-glyceraldehyde 3-phosphate and glycerone phosphate from D-glucose: step 1/4. Catalyzes the phosphorylation of hexose, such as D-glucose and D-fructose, to hexose 6-phosphate (D-glucose 6-phosphate and D-fructose 6-phosphate, respectively). Mediates the initial step of glycolysis by catalyzing phosphorylation of D-glucose to D-glucose 6-phosphate. The sequence is that of Hexokinase (HXK) from Schwanniomyces occidentalis (Yeast).